Consider the following 131-residue polypeptide: Snaclec macrovipecetin subunit alpha (131 aa).

Intrachain disulfides connect Cys2–Cys13, Cys30–Cys125, and Cys100–Cys117. In terms of domain architecture, C-type lectin spans 9–126; it reads HEEHCYKVFR…CEDKNPFICK (118 aa).

Heterodimer of subunits alpha and beta; disulfide-linked. As to expression, expressed by the venom gland.

The protein localises to the secreted. Its function is as follows. Interferes with one step of hemostasis (modulation of platelet aggregation, or coagulation cascade, for example). The sequence is that of Snaclec macrovipecetin subunit alpha from Macrovipera lebetinus (Levantine viper).